Here is a 507-residue protein sequence, read N- to C-terminus: Methionine--tRNA ligase (507 aa).

The short motif at 12-22 (YYVNDVSHIGH) is the 'HIGH' region element. Positions 295–299 (KISKS) match the 'KMSKS' region motif. ATP is bound at residue Lys-298.

Belongs to the class-I aminoacyl-tRNA synthetase family. MetG type 2B subfamily. In terms of assembly, monomer.

The protein resides in the cytoplasm. The enzyme catalyses tRNA(Met) + L-methionine + ATP = L-methionyl-tRNA(Met) + AMP + diphosphate. Is required not only for elongation of protein synthesis but also for the initiation of all mRNA translation through initiator tRNA(fMet) aminoacylation. The chain is Methionine--tRNA ligase from Rickettsia typhi (strain ATCC VR-144 / Wilmington).